Here is a 490-residue protein sequence, read N- to C-terminus: Protein nucleotidyltransferase YdiU (490 aa).

8 residues coordinate ATP: Gly92, Gly94, Arg95, Lys114, Asp126, Gly127, Arg177, and Arg184. The active-site Proton acceptor is Asp256. Mg(2+) is bound by residues Asn257 and Asp266. Residue Asp266 participates in ATP binding.

Belongs to the SELO family. The cofactor is Mg(2+). Mn(2+) serves as cofactor.

It carries out the reaction L-seryl-[protein] + ATP = 3-O-(5'-adenylyl)-L-seryl-[protein] + diphosphate. It catalyses the reaction L-threonyl-[protein] + ATP = 3-O-(5'-adenylyl)-L-threonyl-[protein] + diphosphate. The catalysed reaction is L-tyrosyl-[protein] + ATP = O-(5'-adenylyl)-L-tyrosyl-[protein] + diphosphate. The enzyme catalyses L-histidyl-[protein] + UTP = N(tele)-(5'-uridylyl)-L-histidyl-[protein] + diphosphate. It carries out the reaction L-seryl-[protein] + UTP = O-(5'-uridylyl)-L-seryl-[protein] + diphosphate. It catalyses the reaction L-tyrosyl-[protein] + UTP = O-(5'-uridylyl)-L-tyrosyl-[protein] + diphosphate. In terms of biological role, nucleotidyltransferase involved in the post-translational modification of proteins. It can catalyze the addition of adenosine monophosphate (AMP) or uridine monophosphate (UMP) to a protein, resulting in modifications known as AMPylation and UMPylation. The sequence is that of Protein nucleotidyltransferase YdiU from Bordetella avium (strain 197N).